Reading from the N-terminus, the 502-residue chain is Glycogen synthase 1 (502 aa).

Residue lysine 18 coordinates ADP-alpha-D-glucose.

Belongs to the glycosyltransferase 1 family. Bacterial/plant glycogen synthase subfamily.

The enzyme catalyses [(1-&gt;4)-alpha-D-glucosyl](n) + ADP-alpha-D-glucose = [(1-&gt;4)-alpha-D-glucosyl](n+1) + ADP + H(+). It functions in the pathway glycan biosynthesis; glycogen biosynthesis. In terms of biological role, synthesizes alpha-1,4-glucan chains using ADP-glucose. This is Glycogen synthase 1 from Geobacter metallireducens (strain ATCC 53774 / DSM 7210 / GS-15).